Consider the following 116-residue polypeptide: Aspartate 1-decarboxylase (116 aa).

The active-site Schiff-base intermediate with substrate; via pyruvic acid is serine 25. Position 25 is a pyruvic acid (Ser) (serine 25). Threonine 57 is a binding site for substrate. The active-site Proton donor is tyrosine 58. 73-75 (GAA) is a substrate binding site.

Belongs to the PanD family. As to quaternary structure, heterooctamer of four alpha and four beta subunits. Requires pyruvate as cofactor. In terms of processing, is synthesized initially as an inactive proenzyme, which is activated by self-cleavage at a specific serine bond to produce a beta-subunit with a hydroxyl group at its C-terminus and an alpha-subunit with a pyruvoyl group at its N-terminus.

Its subcellular location is the cytoplasm. It carries out the reaction L-aspartate + H(+) = beta-alanine + CO2. The protein operates within cofactor biosynthesis; (R)-pantothenate biosynthesis; beta-alanine from L-aspartate: step 1/1. Its function is as follows. Catalyzes the pyruvoyl-dependent decarboxylation of aspartate to produce beta-alanine. This is Aspartate 1-decarboxylase from Leptospira interrogans serogroup Icterohaemorrhagiae serovar Lai (strain 56601).